We begin with the raw amino-acid sequence, 217 residues long: MTPEEQAAHQELIEQARLLFAGRVEFLKSAPALKFLPDPDVPEIAFAGRSNVGKSSLLNALTGRKSLARTSVTPGRTQELNYFEVGEPTRLRLVDMPGYGFAKAPPKVVETWRRLVRDFLRGRVVLKRTLLLIDSRHGVKPVDDDMMQMLDEAGVGYRIVLTKADKIKASELEKVTAETIAAARKRTAAYPEIIVTSSEKKMGIEELRAAVLQDAMG.

The EngB-type G domain maps to 40-217; the sequence is DVPEIAFAGR…RAAVLQDAMG (178 aa). Residues 48 to 55, 75 to 79, 95 to 98, 162 to 165, and 196 to 198 each bind GTP; these read GRSNVGKS, GRTQE, DMPG, TKAD, and TSS. Mg(2+) contacts are provided by Ser55 and Thr77.

The protein belongs to the TRAFAC class TrmE-Era-EngA-EngB-Septin-like GTPase superfamily. EngB GTPase family. Mg(2+) is required as a cofactor.

Its function is as follows. Necessary for normal cell division and for the maintenance of normal septation. This is Probable GTP-binding protein EngB from Novosphingobium aromaticivorans (strain ATCC 700278 / DSM 12444 / CCUG 56034 / CIP 105152 / NBRC 16084 / F199).